The primary structure comprises 187 residues: MSNVFQNTSTVTVLQGDYKVTTDPKVVFSTVLGSCIAACIYDEQVGVGGMNHFLLASSAGSGGVSARYGVHAMELLINGIMKKGALRSNLKAKVFGGAKMSANLSDIGANNADFVQRFLRDEGIPVISSSVGGTSARRVRFHACSGAAQQTHVADDRRLGEEERAAVARTQAAPARKPAAADNVTLF.

This sequence belongs to the CheD family.

The catalysed reaction is L-glutaminyl-[protein] + H2O = L-glutamyl-[protein] + NH4(+). Its function is as follows. Probably deamidates glutamine residues to glutamate on methyl-accepting chemotaxis receptors (MCPs), playing an important role in chemotaxis. This is Probable chemoreceptor glutamine deamidase CheD 1 from Ruegeria sp. (strain TM1040) (Silicibacter sp.).